The following is a 180-amino-acid chain: MRILGIDPGLRVTGFGVIDVSGHRLAYVASGVIKTPTADLPTRLGTIYDGVSTLIREHTPDQAAIEKVFVNVNPQSTLLLGQARGAAICGLVSGGLPVAEYTALQLKQAVVGYGRATKEQMQEMVARLLSLSGLPGTDAADALGMAICHAHGGNTLNTLGGIAPALAKKGLRVRRGRLVG.

Residues aspartate 7, glutamate 66, and aspartate 138 contribute to the active site. Aspartate 7, glutamate 66, and aspartate 138 together coordinate Mg(2+).

The protein belongs to the RuvC family. As to quaternary structure, homodimer which binds Holliday junction (HJ) DNA. The HJ becomes 2-fold symmetrical on binding to RuvC with unstacked arms; it has a different conformation from HJ DNA in complex with RuvA. In the full resolvosome a probable DNA-RuvA(4)-RuvB(12)-RuvC(2) complex forms which resolves the HJ. Mg(2+) is required as a cofactor.

The protein resides in the cytoplasm. The enzyme catalyses Endonucleolytic cleavage at a junction such as a reciprocal single-stranded crossover between two homologous DNA duplexes (Holliday junction).. Its function is as follows. The RuvA-RuvB-RuvC complex processes Holliday junction (HJ) DNA during genetic recombination and DNA repair. Endonuclease that resolves HJ intermediates. Cleaves cruciform DNA by making single-stranded nicks across the HJ at symmetrical positions within the homologous arms, yielding a 5'-phosphate and a 3'-hydroxyl group; requires a central core of homology in the junction. The consensus cleavage sequence is 5'-(A/T)TT(C/G)-3'. Cleavage occurs on the 3'-side of the TT dinucleotide at the point of strand exchange. HJ branch migration catalyzed by RuvA-RuvB allows RuvC to scan DNA until it finds its consensus sequence, where it cleaves and resolves the cruciform DNA. The protein is Crossover junction endodeoxyribonuclease RuvC of Burkholderia thailandensis (strain ATCC 700388 / DSM 13276 / CCUG 48851 / CIP 106301 / E264).